The primary structure comprises 26 residues: Muscarinic toxin-like protein 1 (26 aa).

The protein belongs to the three-finger toxin family. Short-chain subfamily. Orphan group VIII (haditoxin) sub-subfamily. Homodimer; non-covalently linked. As to expression, expressed by the venom gland.

The protein localises to the secreted. Its function is as follows. Antagonist of muscle and neuronal nicotinic acetylcholine receptors (nAChR) with highest affinity for neuronal alpha-7/CHRNA7 nAChRs. This Naja naja (Indian cobra) protein is Muscarinic toxin-like protein 1.